The chain runs to 498 residues: Protein disulfide-isomerase (498 aa).

A signal peptide spans 1 to 23 (MASFRGSIWYCIFVLSLIAVAIS). Thioredoxin domains lie at 24 to 143 (AAES…KQSG) and 339 to 484 (YLKA…KNRD). The N-linked (GlcNAc...) asparagine glycan is linked to asparagine 41. Catalysis depends on nucleophile residues cysteine 61, cysteine 64, cysteine 406, and cysteine 409. 2 disulfide bridges follow: cysteine 61–cysteine 64 and cysteine 406–cysteine 409. Residues 495 to 498 (KDEL) carry the Prevents secretion from ER motif.

Belongs to the protein disulfide isomerase family.

Its subcellular location is the endoplasmic reticulum lumen. It catalyses the reaction Catalyzes the rearrangement of -S-S- bonds in proteins.. In terms of biological role, participates in the folding of proteins containing disulfide bonds, may be involved in glycosylation, prolyl hydroxylation and triglyceride transfer. In Ricinus communis (Castor bean), this protein is Protein disulfide-isomerase.